The sequence spans 103 residues: Histone H4 (103 aa).

The segment covering 1-14 (MSGRGKGGKGLGKG) has biased composition (gly residues). Residues 1–20 (MSGRGKGGKGLGKGGAKRHR) are disordered. Position 2 is an N-acetylserine (serine 2). At serine 2 the chain carries Phosphoserine. At arginine 4 the chain carries Asymmetric dimethylarginine; by PRMT1; alternate. A Citrulline; alternate modification is found at arginine 4. Omega-N-methylarginine; by PRMT1; alternate is present on arginine 4. At arginine 4 the chain carries Symmetric dimethylarginine; by PRMT5 and PRMT7; alternate. 4 positions are modified to N6-(2-hydroxyisobutyryl)lysine; alternate: lysine 6, lysine 9, lysine 13, and lysine 17. Position 6 is an N6-acetyl-N6-methyllysine; alternate (lysine 6). N6-acetyllysine is present on residues lysine 6, lysine 9, lysine 13, and lysine 17. Lysine 6, lysine 9, lysine 13, and lysine 17 each carry N6-butyryllysine; alternate. Lysine 6 carries the N6-glutaryllysine; alternate modification. Residues lysine 6, lysine 9, lysine 13, and lysine 17 each carry the N6-lactoyllysine; alternate modification. An N6-propionyllysine; alternate modification is found at lysine 9. Lysine 13 is modified (N6-acetyl-N6-methyllysine; alternate). Lysine 13 carries the N6-glutaryllysine; alternate modification. An N6-methyllysine; alternate modification is found at lysine 13. Lysine 17 is subject to N6-propionyllysine; alternate. A DNA-binding region spans residues 17–21 (KRHRK). N6-methyllysine; alternate is present on lysine 21. The residue at position 21 (lysine 21) is an N6,N6,N6-trimethyllysine; alternate. Lysine 21 carries the N6,N6-dimethyllysine; alternate modification. Lysine 21 bears the N6-methylated lysine mark. N6-(2-hydroxyisobutyryl)lysine; alternate occurs at positions 32 and 45. Lysine 32 bears the N6-acetyllysine mark. Lysine 32 and lysine 45 each carry N6-butyryllysine; alternate. Lysine 32 bears the N6-glutaryllysine; alternate mark. Position 32 is an N6-lactoyllysine; alternate (lysine 32). An N6-propionyllysine; alternate mark is found at lysine 32 and lysine 45. Residue lysine 32 is modified to N6-succinyllysine; alternate. A Glycyl lysine isopeptide (Lys-Gly) (interchain with G-Cter in UFM1); alternate cross-link involves residue lysine 32. Serine 48 carries the phosphoserine; by PAK2 modification. Tyrosine 52 is modified (phosphotyrosine). Lysine 60 carries the N6-acetyllysine modification. An N6-glutaryllysine; alternate mark is found at lysine 60, lysine 78, and lysine 80. Position 60 is an N6-(2-hydroxyisobutyryl)lysine (lysine 60). Residues lysine 78 and lysine 80 each carry the N6-(2-hydroxyisobutyryl)lysine; alternate modification. 2 positions are modified to N6-butyryllysine; alternate: lysine 78 and lysine 80. At lysine 78 the chain carries N6-lactoyllysine; alternate. 2 positions are modified to N6-propionyllysine; alternate: lysine 78 and lysine 80. Position 78 is an N6-succinyllysine (lysine 78). An N6-acetyllysine modification is found at lysine 80. Tyrosine 89 carries the phosphotyrosine modification. Residue lysine 92 is modified to N6-(2-hydroxyisobutyryl)lysine; alternate. An N6-butyryllysine; alternate modification is found at lysine 92. Lysine 92 bears the N6-glutaryllysine; alternate mark. N6-lactoyllysine; alternate is present on lysine 92. An N6-propionyllysine; alternate modification is found at lysine 92. N6-succinyllysine; alternate is present on lysine 92. Lysine 92 is subject to N6-acetyllysine; alternate. A Glycyl lysine isopeptide (Lys-Gly) (interchain with G-Cter in ubiquitin); alternate cross-link involves residue lysine 92.

The protein belongs to the histone H4 family. In terms of assembly, the nucleosome is a histone octamer containing two molecules each of H2A, H2B, H3 and H4 assembled in one H3-H4 heterotetramer and two H2A-H2B heterodimers. The octamer wraps approximately 147 bp of DNA. Acetylation at Lys-6 (H4K5ac), Lys-9 (H4K8ac), Lys-13 (H4K12ac) and Lys-17 (H4K16ac) occurs in coding regions of the genome but not in heterochromatin. In terms of processing, citrullination at Arg-4 (H4R3ci) by PADI4 impairs methylation. Post-translationally, monomethylation and asymmetric dimethylation at Arg-4 (H4R3me1 and H4R3me2a, respectively) by PRMT1 favors acetylation at Lys-9 (H4K8ac) and Lys-13 (H4K12ac). Demethylation is performed by JMJD6. Symmetric dimethylation on Arg-4 (H4R3me2s) by the PRDM1/PRMT5 complex may play a crucial role in the germ-cell lineage. Monomethylated, dimethylated or trimethylated at Lys-21 (H4K20me1, H4K20me2, H4K20me3). Monomethylation is performed by KMT5A/SET8. Trimethylation is performed by KMT5B and KMT5C and induces gene silencing. Monomethylated at Lys-13 (H4K12me1) by N6AMT1; H4K12me1 modification is present at the promoters of numerous genes encoding cell cycle regulators. In terms of processing, acetyl-methylated at Lys-6 and Lys-13 (H4K5acme and H4K12acme, respectively), acetyl-methylation is an epigenetic mark of active chromatin associated with increased transcriptional initiation. Acetyl-methylation is formed by acetylation by EP300/p300 of lysine residues that are already monomethylated on the same side chain. H4K5acme and H4K12acme marks specifically bind BRD2. Post-translationally, phosphorylated by pak2 at Ser-48 (H4S47ph). This phosphorylation increases the association of H3.3-H4 with the histone chaperone HIRA, thus promoting nucleosome assembly of H3.3-H4 and inhibiting nucleosome assembly of H3.1-H4. Ubiquitinated by the CUL4-DDB-RBX1 complex in response to ultraviolet irradiation. This may weaken the interaction between histones and DNA and facilitate DNA accessibility to repair proteins. Monoubiquitinated at Lys-92 of histone H4 (H4K91ub1) in response to DNA damage. The exact role of H4K91ub1 in DNA damage response is still unclear but it may function as a licensing signal for additional histone H4 post-translational modifications such as H4 Lys-21 methylation (H4K20me). In terms of processing, sumoylated, which is associated with transcriptional repression. Post-translationally, butyrylation of histones marks active promoters and competes with histone acetylation. Glutarylation at Lys-92 (H4K91glu) destabilizes nucleosomes by promoting dissociation of the H2A-H2B dimers from nucleosomes. In terms of processing, ufmylated; monofmylated by UFL1 at Lys-32 (H4K31Ufm1) in response to DNA damage. Post-translationally, lactylated in macrophages by EP300/P300 by using lactoyl-CoA directly derived from endogenous or exogenous lactate, leading to stimulates gene transcription. Delactylated by SIRT3 at Lys-17 (H4K16la).

It is found in the nucleus. Its subcellular location is the chromosome. Its function is as follows. Core component of nucleosome. Nucleosomes wrap and compact DNA into chromatin, limiting DNA accessibility to the cellular machineries which require DNA as a template. Histones thereby play a central role in transcription regulation, DNA repair, DNA replication and chromosomal stability. DNA accessibility is regulated via a complex set of post-translational modifications of histones, also called histone code, and nucleosome remodeling. In Xenopus laevis (African clawed frog), this protein is Histone H4.